We begin with the raw amino-acid sequence, 155 residues long: Small ribosomal subunit protein uS7 (155 aa).

This sequence belongs to the universal ribosomal protein uS7 family. In terms of assembly, part of the 30S ribosomal subunit. Contacts proteins S9 and S11.

Functionally, one of the primary rRNA binding proteins, it binds directly to 16S rRNA where it nucleates assembly of the head domain of the 30S subunit. Is located at the subunit interface close to the decoding center, probably blocks exit of the E-site tRNA. This is Small ribosomal subunit protein uS7 from Thioalkalivibrio sulfidiphilus (strain HL-EbGR7).